The sequence spans 195 residues: HTH-type transcriptional regulator BetI (195 aa).

The HTH tetR-type domain maps to 8 to 68 (SIRRRQLIDA…ATMRDITSQL (61 aa)). Residues 31-50 (TIAQIARRAGVSTGIISHYF) constitute a DNA-binding region (H-T-H motif).

Its pathway is amine and polyamine biosynthesis; betaine biosynthesis via choline pathway [regulation]. Functionally, repressor involved in the biosynthesis of the osmoprotectant glycine betaine. It represses transcription of the choline transporter BetT and the genes of BetAB involved in the synthesis of glycine betaine. This Escherichia coli O8 (strain IAI1) protein is HTH-type transcriptional regulator BetI.